We begin with the raw amino-acid sequence, 217 residues long: ATP-binding protein BexA (217 aa).

Residues 2–217 enclose the ABC transporter domain; that stretch reads IRVNNVCKKY…AYQYYNETQK (216 aa). 38–45 is an ATP binding site; the sequence is GRNGAGKS.

The protein belongs to the ABC transporter superfamily.

The protein resides in the cell inner membrane. Its function is as follows. Putative ATP-binding protein, and an energy-coupling component of capsule polysaccharide export apparatus. The chain is ATP-binding protein BexA (bexA) from Haemophilus influenzae.